The following is a 28-amino-acid chain: Basic phospholipase A2 homolog BmatTX-II (28 aa).

In terms of assembly, monomer. In terms of tissue distribution, expressed by the venom gland.

The protein localises to the secreted. Functionally, snake venom phospholipase A2 homolog that lacks enzymatic activity. Shows high myotoxic activity, neutrophil activation (demonstrated by activation induction of IL-1beta production), and slight cytotoxicity against Jurkat (leukemia T) and SK-BR-3 (breast adenocarcinoma) tumor cell lines. A model of myotoxic mechanism has been proposed: an apo Lys49-PLA2 is activated by the entrance of a hydrophobic molecule (e.g. fatty acid) at the hydrophobic channel of the protein leading to a reorientation of a monomer. This reorientation causes a transition between 'inactive' to 'active' states, causing alignment of C-terminal and membrane-docking sites (MDoS) side-by-side and putting the membrane-disruption sites (MDiS) in the same plane, exposed to solvent and in a symmetric position for both monomers. The MDoS region stabilizes the toxin on membrane by the interaction of charged residues with phospholipid head groups. Subsequently, the MDiS region destabilizes the membrane with penetration of hydrophobic residues. This insertion causes a disorganization of the membrane, allowing an uncontrolled influx of ions (i.e. calcium and sodium), and eventually triggering irreversible intracellular alterations and cell death. This Bothrops mattogrossensis (Pitviper) protein is Basic phospholipase A2 homolog BmatTX-II.